The primary structure comprises 124 residues: Small ribosomal subunit protein uS12 (124 aa).

At D89 the chain carries 3-methylthioaspartic acid.

It belongs to the universal ribosomal protein uS12 family. Part of the 30S ribosomal subunit. Contacts proteins S8 and S17. May interact with IF1 in the 30S initiation complex.

Functionally, with S4 and S5 plays an important role in translational accuracy. Its function is as follows. Interacts with and stabilizes bases of the 16S rRNA that are involved in tRNA selection in the A site and with the mRNA backbone. Located at the interface of the 30S and 50S subunits, it traverses the body of the 30S subunit contacting proteins on the other side and probably holding the rRNA structure together. The combined cluster of proteins S8, S12 and S17 appears to hold together the shoulder and platform of the 30S subunit. This is Small ribosomal subunit protein uS12 from Psychrobacter sp. (strain PRwf-1).